The chain runs to 643 residues: MWSIVTDPIKDLISKVVKNSIHPDFHDAVSKMTIIDAFLFFIVHSIDKLGIWHRLPVFFGLLYLAIRRHLHQEYNLLNVGTTPVGIRSNPSDFPYRTADGRYNDPFNDGAGSQGSFFGRNILPVDQKNKLLKPDPMVVVTKLLERKTYKDTGTQFNVIAASWIQFMIHDWIDHMEDTKQVELSAPSEVASQCPLKSFKFFKTKEIPTGFYDIKTGHANVRTPWWDGSVVYGSNEQVLNKVRTFKDGKLKISKEGHLLHNEDGTAISGDIRNSWAGVTTLQTLFVQEHNAVCDALKKENSDLEDEDLYRHARLVTSAVIAKIHTIDWTVELLKTDTLLAGMRANWYGLLGKQFKDRFGHVGNSILSGFVGMKRSENHGVPYSLTEEFATVYRMHPLLPDSLHLRDISASPGPNKSPPLIKEIPMNDLIGLQGEKTLLEIGNAKKLVSMGHQACGALELWNYPSWLRNLVPHNIDGTERSDHVDLAALEVYRDRERNVARYNQFRRGLLLIPISKWEDLTDDEEAIKVLEEVYGDDVEELDVLVGLMAEKKIKGFAISETAFVIFLLMASRRLEADRFFTSNFNEETYTKKGLEWVNTTESLKDVIDRHHPEMTHKWLNSSSAFSVWDTSPNKHNHIPIYFRVPN.

Histidine 168 acts as the Proton acceptor in catalysis. Aspartate 169 is a binding site for Ca(2+). Histidine 173 is a binding site for heme b. Ca(2+) contacts are provided by threonine 221, tryptophan 223, aspartate 225, and serine 227. Heme b contacts are provided by histidine 393, arginine 490, and arginine 494.

This sequence belongs to the peroxidase family. It depends on heme b as a cofactor. Ca(2+) serves as cofactor.

The enzyme catalyses hexadecanoate + O2 = (2R)-2-hydroperoxyhexadecanoate. The catalysed reaction is dodecanoate + O2 = (2R)-2-hydroperoxydodecanoate. In terms of biological role, alpha-dioxygenase that catalyzes the primary oxygenation step of a variety of 14-20 carbon fatty acids, containing up to three unsaturated bonds, into their corresponding 2R-hydroperoxides. Involved in the production of oxylipins that function in cell signaling, wound healing, and protection from infection. The alpha-oxidation pathway of fatty acids may play a role during plant developmental processes. The chain is Alpha-dioxygenase PIOX from Pisum sativum (Garden pea).